The chain runs to 202 residues: Peptidyl-tRNA hydrolase (202 aa).

Tyr14 lines the tRNA pocket. The active-site Proton acceptor is the His19. 3 residues coordinate tRNA: Tyr64, Asn66, and Asn112.

Belongs to the PTH family. As to quaternary structure, monomer.

It is found in the cytoplasm. It carries out the reaction an N-acyl-L-alpha-aminoacyl-tRNA + H2O = an N-acyl-L-amino acid + a tRNA + H(+). In terms of biological role, hydrolyzes ribosome-free peptidyl-tRNAs (with 1 or more amino acids incorporated), which drop off the ribosome during protein synthesis, or as a result of ribosome stalling. Catalyzes the release of premature peptidyl moieties from peptidyl-tRNA molecules trapped in stalled 50S ribosomal subunits, and thus maintains levels of free tRNAs and 50S ribosomes. In Nitrobacter winogradskyi (strain ATCC 25391 / DSM 10237 / CIP 104748 / NCIMB 11846 / Nb-255), this protein is Peptidyl-tRNA hydrolase.